The following is a 453-amino-acid chain: MITLKEALKYSKEELENLKKELNEKAKKEKKLGAYIEQFLDKDLSVSGEGVPVAIKDNISVKGWELTSASKILQGYIAPYDASAIVNLKANGFAPFGRCNMDEFAMGSSTASSCYGKTLNPLNFERVPGGSSGGSAAAVAGGLALASLGSDTGGSVRQPAAFCGCVGFKPSYGRVSRYGLASYSSSLDQIGVLTQNVEDAAILYDAIAGYDKMDSTSANIEFIKTAPNLNANEKLKIAVIENYVNDADTEVKNALLKTIDMLKANGHEIVYKNLLDSKFDIAAYYIIATAEASANLSRYDGVRYGKRSENIQNLKEMYVNTRSEGFGEEVKRRILLGTFVLSSGYYDAYYIKAQKARAFIKAKYEEILQDCDLIFMPVTPTMAFKFDTQKSPMQTYLEDVYTISVNLAGLGGISVPVAKDKEGLNISAQLICKAYDEQTLLDGALSLEQMIKN.

Active-site charge relay system residues include Lys-56 and Ser-131. Ser-155 (acyl-ester intermediate) is an active-site residue.

Belongs to the amidase family. GatA subfamily. Heterotrimer of A, B and C subunits.

The enzyme catalyses L-glutamyl-tRNA(Gln) + L-glutamine + ATP + H2O = L-glutaminyl-tRNA(Gln) + L-glutamate + ADP + phosphate + H(+). Functionally, allows the formation of correctly charged Gln-tRNA(Gln) through the transamidation of misacylated Glu-tRNA(Gln) in organisms which lack glutaminyl-tRNA synthetase. The reaction takes place in the presence of glutamine and ATP through an activated gamma-phospho-Glu-tRNA(Gln). The polypeptide is Glutamyl-tRNA(Gln) amidotransferase subunit A (Campylobacter jejuni subsp. doylei (strain ATCC BAA-1458 / RM4099 / 269.97)).